Reading from the N-terminus, the 304-residue chain is Homoserine kinase (304 aa).

86–96 contributes to the ATP binding site; sequence PLARGLGSSAA.

This sequence belongs to the GHMP kinase family. Homoserine kinase subfamily.

The protein resides in the cytoplasm. It catalyses the reaction L-homoserine + ATP = O-phospho-L-homoserine + ADP + H(+). Its pathway is amino-acid biosynthesis; L-threonine biosynthesis; L-threonine from L-aspartate: step 4/5. In terms of biological role, catalyzes the ATP-dependent phosphorylation of L-homoserine to L-homoserine phosphate. This Carboxydothermus hydrogenoformans (strain ATCC BAA-161 / DSM 6008 / Z-2901) protein is Homoserine kinase.